A 188-amino-acid polypeptide reads, in one-letter code: Acireductone dioxygenase (188 aa).

Residues H97, H99, E103, and H141 each contribute to the Fe(2+) site. Positions 97, 99, 103, and 141 each coordinate Ni(2+).

Belongs to the acireductone dioxygenase (ARD) family. As to quaternary structure, monomer. Requires Fe(2+) as cofactor. The cofactor is Ni(2+).

It carries out the reaction 1,2-dihydroxy-5-(methylsulfanyl)pent-1-en-3-one + O2 = 3-(methylsulfanyl)propanoate + CO + formate + 2 H(+). The catalysed reaction is 1,2-dihydroxy-5-(methylsulfanyl)pent-1-en-3-one + O2 = 4-methylsulfanyl-2-oxobutanoate + formate + 2 H(+). Its pathway is amino-acid biosynthesis; L-methionine biosynthesis via salvage pathway; L-methionine from S-methyl-5-thio-alpha-D-ribose 1-phosphate: step 5/6. Its function is as follows. Catalyzes 2 different reactions between oxygen and the acireductone 1,2-dihydroxy-3-keto-5-methylthiopentene (DHK-MTPene) depending upon the metal bound in the active site. Fe-containing acireductone dioxygenase (Fe-ARD) produces formate and 2-keto-4-methylthiobutyrate (KMTB), the alpha-ketoacid precursor of methionine in the methionine recycle pathway. Ni-containing acireductone dioxygenase (Ni-ARD) produces methylthiopropionate, carbon monoxide and formate, and does not lie on the methionine recycle pathway. The polypeptide is Acireductone dioxygenase (Xanthomonas axonopodis pv. citri (strain 306)).